We begin with the raw amino-acid sequence, 239 residues long: DNA repair protein RecO (239 aa).

The protein belongs to the RecO family.

Functionally, involved in DNA repair and RecF pathway recombination. The protein is DNA repair protein RecO of Bifidobacterium longum (strain DJO10A).